Here is a 209-residue protein sequence, read N- to C-terminus: Uridine kinase (209 aa).

12–19 (GGTGSGKS) is a binding site for ATP.

This sequence belongs to the uridine kinase family.

Its subcellular location is the cytoplasm. It carries out the reaction uridine + ATP = UMP + ADP + H(+). The enzyme catalyses cytidine + ATP = CMP + ADP + H(+). It functions in the pathway pyrimidine metabolism; CTP biosynthesis via salvage pathway; CTP from cytidine: step 1/3. It participates in pyrimidine metabolism; UMP biosynthesis via salvage pathway; UMP from uridine: step 1/1. The protein is Uridine kinase of Clostridium tetani (strain Massachusetts / E88).